Here is a 41-residue protein sequence, read N- to C-terminus: Submaxillary gland androgen-regulated protein 2, isoform beta (41 aa).

The signal sequence occupies residues 1-22 (MKALYMVFVLWVLIGCFLRLLK).

Its subcellular location is the secreted. Functionally, may play a role in protection or detoxification. This is Submaxillary gland androgen-regulated protein 2, isoform beta (Smr2) from Mus musculus (Mouse).